The sequence spans 131 residues: Small ribosomal subunit protein uS11 (131 aa).

Belongs to the universal ribosomal protein uS11 family. Part of the 30S ribosomal subunit. Interacts with proteins S7 and S18. Binds to IF-3.

Its function is as follows. Located on the platform of the 30S subunit, it bridges several disparate RNA helices of the 16S rRNA. Forms part of the Shine-Dalgarno cleft in the 70S ribosome. The sequence is that of Small ribosomal subunit protein uS11 from Paramagnetospirillum magneticum (strain ATCC 700264 / AMB-1) (Magnetospirillum magneticum).